A 738-amino-acid chain; its full sequence is Protein Aster-B (738 aa).

The tract at residues 1 to 81 (MKGFKLSCTA…SGGKNSKKSQ (81 aa)) is disordered. Over residues 8-19 (CTASNSNRSTPA) the composition is skewed to polar residues. Ser-28 and Ser-30 each carry phosphoserine. Residues 41 to 51 (MVEKGSDHSSD) are compositionally biased toward basic and acidic residues. A compositionally biased stretch (low complexity) spans 59–70 (QGVQRSCSSQSG). Residues 96-163 (EDFRKLFKQL…KDICSMTKEK (68 aa)) form the GRAM domain. Positions 254–299 (EENEVNDSSSKSSIETKPDASPQLPKKSITNSTLTSTGSSEAPVSF) are disordered. Over residues 259–268 (NDSSSKSSIE) the composition is skewed to polar residues. Phosphoserine is present on Ser-274. The segment covering 281–295 (SITNSTLTSTGSSEA) has biased composition (polar residues). The VASt domain occupies 372–543 (SGRQYVNEVF…ELTKTESTYL (172 aa)). Tyr-389 bears the Phosphotyrosine mark. A phosphoserine mark is found at Ser-550 and Ser-581. Thr-584, Thr-585, and Thr-587 each carry phosphothreonine. Residues 623-643 (LLLVISCVICFSLVLLVVLNM) form a helical membrane-spanning segment.

As to expression, highly expressed in the adrenal gland (at protein level) and brain. Also found in the kidney, testis and macrophages.

It is found in the endoplasmic reticulum membrane. Its subcellular location is the cell membrane. Functionally, cholesterol transporter that mediates non-vesicular transport of cholesterol from the plasma membrane (PM) to the endoplasmic reticulum (ER). Contains unique domains for binding cholesterol and the PM, thereby serving as a molecular bridge for the transfer of cholesterol from the PM to the ER. Plays a crucial role in cholesterol homeostasis in the adrenal gland and has the unique ability to localize to the PM based on the level of membrane cholesterol. In lipid-poor conditions localizes to the ER membrane and in response to excess cholesterol in the PM is recruited to the endoplasmic reticulum-plasma membrane contact sites (EPCS) which is mediated by the GRAM domain. At the EPCS, the sterol-binding VASt/ASTER domain binds to the cholesterol in the PM and facilitates its transfer from the PM to ER. This Mus musculus (Mouse) protein is Protein Aster-B (Gramd1b).